A 442-amino-acid chain; its full sequence is Dihydrolipoyllysine-residue acetyltransferase component of pyruvate dehydrogenase complex (442 aa).

Residues 2 to 77 (AFEFKLPDIG…TVGQTIITFD (76 aa)) enclose the Lipoyl-binding domain. Lysine 43 bears the N6-lipoyllysine mark. Over residues 84 to 97 (LQFKGSDESDDAKT) the composition is skewed to basic and acidic residues. Residues 84–136 (LQFKGSDESDDAKTEAQVQSTAEAGQDVAKEEQAQEPAKATGAGQQDQAEVDP) form a disordered region. The region spanning 141–178 (IAMPSVRKYAREKGVDIRKVTGSGNNGRVVKEDIDSFV) is the Peripheral subunit-binding (PSBD) domain. Residues 182-208 (AQEAAPQETAAPQETAAKPAAAPAPEG) show a composition bias toward low complexity. The interval 182-215 (AQEAAPQETAAPQETAAKPAAAPAPEGEFPETRE) is disordered. The active site involves histidine 413.

Belongs to the 2-oxoacid dehydrogenase family. In terms of assembly, forms a 24-polypeptide structural core with octahedral symmetry. (R)-lipoate serves as cofactor.

It carries out the reaction N(6)-[(R)-dihydrolipoyl]-L-lysyl-[protein] + acetyl-CoA = N(6)-[(R)-S(8)-acetyldihydrolipoyl]-L-lysyl-[protein] + CoA. In terms of biological role, the pyruvate dehydrogenase complex catalyzes the overall conversion of pyruvate to acetyl-CoA and CO(2). It contains multiple copies of three enzymatic components: pyruvate dehydrogenase (E1), dihydrolipoamide acetyltransferase (E2) and lipoamide dehydrogenase (E3). Its function is as follows. The B.subtilis PDH complex also possesses branched-chain 2-oxoacid dehydrogenase (BCDH) activity. The polypeptide is Dihydrolipoyllysine-residue acetyltransferase component of pyruvate dehydrogenase complex (pdhC) (Bacillus subtilis (strain 168)).